The chain runs to 490 residues: Nuclear distribution protein PAC1 (490 aa).

Positions 65–96 (STVLRLQKKIIDLENEIHNLTNIINTTNSETN) form a coiled coil. WD repeat units follow at residues 118-157 (QCEN…NTIP), 163-204 (AHTR…RTLN), 205-245 (GHEH…CLKS), 251-290 (EWCR…GVAM), 293-327 (GHTH…FPSI), 328-367 (PSEL…LIPH), 388-427 (GHSS…ETGS), and 436-487 (GHEG…NSIK).

Belongs to the WD repeat LIS1/nudF family. Self-associates. Interacts with NDL1 and dynein.

The protein localises to the cytoplasm. Its subcellular location is the cytoskeleton. It is found in the spindle pole. Its function is as follows. Positively regulates the activity of the minus-end directed microtubule motor protein dynein. Plays a central role in positioning the mitotic spindle at the bud neck during cell division. Targets cytoplasmic dynein to microtubule plus ends, thereby promoting dynein-mediated microtubule sliding along the bud cortex and consequently the movement of the mitotic spindle to the bud neck. This chain is Nuclear distribution protein PAC1, found in Candida tropicalis (strain ATCC MYA-3404 / T1) (Yeast).